The following is a 573-amino-acid chain: DNA ligase (573 aa).

Position 250 (glutamate 250) interacts with ATP. The active-site N6-AMP-lysine intermediate is lysine 252. The ATP site is built by arginine 257, arginine 272, glutamate 301, phenylalanine 342, arginine 432, and lysine 438.

It belongs to the ATP-dependent DNA ligase family. It depends on Mg(2+) as a cofactor.

The enzyme catalyses ATP + (deoxyribonucleotide)n-3'-hydroxyl + 5'-phospho-(deoxyribonucleotide)m = (deoxyribonucleotide)n+m + AMP + diphosphate.. Its function is as follows. DNA ligase that seals nicks in double-stranded DNA during DNA replication, DNA recombination and DNA repair. This is DNA ligase from Methanococcus vannielii (strain ATCC 35089 / DSM 1224 / JCM 13029 / OCM 148 / SB).